The chain runs to 218 residues: NAD(P)H-quinone oxidoreductase subunit I (218 aa).

4Fe-4S ferredoxin-type domains are found at residues glycine 55 to valine 84 and arginine 95 to glutamate 124. Cysteine 64, cysteine 67, cysteine 70, cysteine 74, cysteine 104, cysteine 107, cysteine 110, and cysteine 114 together coordinate [4Fe-4S] cluster. The segment at methionine 169–lysine 218 is disordered. Residues leucine 192–glycine 201 are compositionally biased toward basic and acidic residues. A compositionally biased stretch (polar residues) spans asparagine 202–lysine 218.

This sequence belongs to the complex I 23 kDa subunit family. As to quaternary structure, NDH-1 is composed of at least 11 different subunits. The cofactor is [4Fe-4S] cluster.

It is found in the cellular thylakoid membrane. The enzyme catalyses a plastoquinone + NADH + (n+1) H(+)(in) = a plastoquinol + NAD(+) + n H(+)(out). It carries out the reaction a plastoquinone + NADPH + (n+1) H(+)(in) = a plastoquinol + NADP(+) + n H(+)(out). Its function is as follows. NDH-1 shuttles electrons from an unknown electron donor, via FMN and iron-sulfur (Fe-S) centers, to quinones in the respiratory and/or the photosynthetic chain. The immediate electron acceptor for the enzyme in this species is believed to be plastoquinone. Couples the redox reaction to proton translocation, and thus conserves the redox energy in a proton gradient. The sequence is that of NAD(P)H-quinone oxidoreductase subunit I from Prochlorococcus marinus (strain NATL1A).